Consider the following 339-residue polypeptide: Serine/threonine-protein kinase pdik1l-A (339 aa).

One can recognise a Protein kinase domain in the interval 8–332 (YDLIREVGRG…LELKLIQIAF (325 aa)). Residues 14 to 22 (VGRGSYGVV) and K37 contribute to the ATP site. The active-site Proton acceptor is the D164.

This sequence belongs to the protein kinase superfamily. Ser/Thr protein kinase family.

Its subcellular location is the nucleus. It carries out the reaction L-seryl-[protein] + ATP = O-phospho-L-seryl-[protein] + ADP + H(+). It catalyses the reaction L-threonyl-[protein] + ATP = O-phospho-L-threonyl-[protein] + ADP + H(+). This chain is Serine/threonine-protein kinase pdik1l-A (pdik1-a), found in Xenopus laevis (African clawed frog).